Consider the following 280-residue polypeptide: SPX domain-containing protein 2 (280 aa).

Residues 1 to 162 (MKFGKSLSSQ…GSMIRLPFVQ (162 aa)) form the SPX domain. Disordered regions lie at residues 191–244 (PTNE…KSTV) and 257–280 (GSST…EPGR).

As to quaternary structure, interacts (via SPX domain) with PHR2 (via C-terminus). Interacts with RLI1 in the nucleus to prevents its positive regulation of leaf inclination during phosphate (Pi) starvation. In terms of tissue distribution, predominantly expressed in roots, leaves and seeds. Localized in leaves lamina joints.

The protein localises to the nucleus. In terms of biological role, inhibits PHR2 DNA-binding activity via a phosphate (Pi)-dependent protein interaction. Together with SPX1, plays a negative role in the regulation of leaf inclination by preventing RLI1 transcription factor activity in Pi depleted conditions. The sequence is that of SPX domain-containing protein 2 from Oryza sativa subsp. japonica (Rice).